Here is a 198-residue protein sequence, read N- to C-terminus: Endoribonuclease YbeY (198 aa).

Positions 156, 160, and 166 each coordinate Zn(2+).

It belongs to the endoribonuclease YbeY family. The cofactor is Zn(2+).

Its subcellular location is the cytoplasm. Functionally, single strand-specific metallo-endoribonuclease involved in late-stage 70S ribosome quality control and in maturation of the 3' terminus of the 16S rRNA. This is Endoribonuclease YbeY from Cupriavidus necator (strain ATCC 17699 / DSM 428 / KCTC 22496 / NCIMB 10442 / H16 / Stanier 337) (Ralstonia eutropha).